The sequence spans 368 residues: High affinity transport system protein p37 (368 aa).

Positions 1–25 (MLFKKFTWVIPSLFLTIISTSLLIS) are cleaved as a signal peptide. A lipid anchor (N-palmitoyl cysteine) is attached at C26. C26 carries S-diacylglycerol cysteine lipidation.

The protein localises to the cell membrane. In terms of biological role, P37 is part of a high-affinity transport system. The polypeptide is High affinity transport system protein p37 (p37) (Mycoplasma genitalium (strain ATCC 33530 / DSM 19775 / NCTC 10195 / G37) (Mycoplasmoides genitalium)).